A 173-amino-acid polypeptide reads, in one-letter code: DNA-directed RNA polymerase subunit delta (173 aa).

The HTH HARE-type domain occupies 14 to 81; sequence MALVEIAHEL…SDQTWGLRSW (68 aa). Residues 110 to 173 form a disordered region; sequence LDLDEFEEID…DYDDEEEEIK (64 aa).

It belongs to the RpoE family. In terms of assembly, RNAP is composed of a core of 2 alpha, a beta and a beta' subunit. The core is associated with a delta subunit, and at least one of epsilon or omega. When a sigma factor is associated with the core the holoenzyme is formed, which can initiate transcription.

Participates in both the initiation and recycling phases of transcription. In the presence of the delta subunit, RNAP displays an increased specificity of transcription, a decreased affinity for nucleic acids, and an increased efficiency of RNA synthesis because of enhanced recycling. May function in sigma factor switching. It displaces RNA bound to RNA polymerase in a binary complex. This Bacillus subtilis (strain 168) protein is DNA-directed RNA polymerase subunit delta.